The primary structure comprises 259 residues: Protein CDI (259 aa).

Positions 236–259 (FADLWLNEMEEYNKENKKEADNAK) form a coiled coil.

In terms of tissue distribution, mostly expressed in pollen grains and pollen tubes, and, at low levels, in seedlings, roots, stems, leaves, flowers and siliques.

It localises to the cytoplasm. The protein resides in the cytosol. Its function is as follows. Probable nucleotide-diphospho-sugar transferase required for pollen germination and tube growth. This is Protein CDI from Arabidopsis thaliana (Mouse-ear cress).